Here is a 204-residue protein sequence, read N- to C-terminus: High frequency lysogenization protein HflD homolog (204 aa).

Belongs to the HflD family.

Its subcellular location is the cytoplasm. The protein localises to the cell inner membrane. The sequence is that of High frequency lysogenization protein HflD homolog from Actinobacillus succinogenes (strain ATCC 55618 / DSM 22257 / CCUG 43843 / 130Z).